The sequence spans 535 residues: UDP-glucuronosyltransferase 1A1 (535 aa).

Positions 1–29 are cleaved as a signal peptide; sequence MTVVCWSSRLLLLLPYLLLCVFGPSASHA. 3 N-linked (GlcNAc...) asparagine glycosylation sites follow: Asn-89, Asn-297, and Asn-435. The helical transmembrane segment at 493 to 509 threads the bilayer; sequence VIGFLLAIVLTVVFIVF.

The protein belongs to the UDP-glycosyltransferase family. In terms of assembly, homodimers. Homooligomer. Interacts with UGT1A3, UGT1A4, UGT1A6, UGT1A7, UGT1A8, UGT1A9 and UGT1A10 to form heterodimers. In terms of tissue distribution, highly expressed in liver and at lower levels in colon, kidney, stomach and intestine.

It localises to the endoplasmic reticulum membrane. It catalyses the reaction glucuronate acceptor + UDP-alpha-D-glucuronate = acceptor beta-D-glucuronoside + UDP + H(+). It carries out the reaction 17beta-estradiol + UDP-alpha-D-glucuronate = 17beta-estradiol 3-O-(beta-D-glucuronate) + UDP + H(+). The enzyme catalyses 2-hydroxyestrone + UDP-alpha-D-glucuronate = 2-hydroxyestrone 3-O-(beta-D-glucuronate) + UDP + H(+). The catalysed reaction is 2-hydroxy-17beta-estradiol + UDP-alpha-D-glucuronate = 2-hydroxy-17beta-estradiol 3-O-(beta-D-glucuronate) + UDP + H(+). It catalyses the reaction 2-methoxy-17beta-estradiol + UDP-alpha-D-glucuronate = 2-methoxy-17beta-estradiol 3-O-(beta-D-glucuronate) + UDP + H(+). It carries out the reaction 17alpha-estradiol + UDP-alpha-D-glucuronate = 17alpha-estradiol 3-O-(beta-D-glucuronate) + UDP + H(+). The enzyme catalyses 16beta,17beta-estriol + UDP-alpha-D-glucuronate = 16beta,17beta-estriol 16-O-(beta-D-glucuronate) + UDP + H(+). The catalysed reaction is losartan + UDP-alpha-D-glucuronate = losartan-2-N-beta-D-glucuronide + UDP. It catalyses the reaction prunetin + UDP-alpha-D-glucuronate = prunetin-4'-O-beta-D-glucuronide + UDP. It carries out the reaction SN-38 + UDP-alpha-D-glucuronate = SN-38 O-beta-D-glucuronide + UDP + H(+). The enzyme catalyses (4Z,15Z)-bilirubin IXalpha + UDP-alpha-D-glucuronate = (4Z,15Z)-bilirubin IXalpha C12-beta-D-glucuronoside + UDP. The catalysed reaction is (4Z,15Z)-bilirubin IXalpha + UDP-alpha-D-glucuronate = (4Z,15Z)-bilirubin IXalpha C8-beta-D-glucuronoside + UDP. It catalyses the reaction (4Z,15Z)-bilirubin IXalpha C8-beta-D-glucuronoside + UDP-alpha-D-glucuronate = (4Z,15Z)-bilirubin IXalpha C8,C12-beta-D-bisglucuronoside + UDP. It carries out the reaction (4Z,15Z)-bilirubin IXalpha C12-beta-D-glucuronoside + UDP-alpha-D-glucuronate = (4Z,15Z)-bilirubin IXalpha C8,C12-beta-D-bisglucuronoside + UDP. The enzyme catalyses 8-iso-prostaglandin F2alpha + UDP-alpha-D-glucuronate = 8-iso-prostaglandin F2alpha-glucuronide + UDP + H(+). The catalysed reaction is (5Z,8Z,11Z,14Z)-eicosatetraenoate + UDP-alpha-D-glucuronate = O-[(5Z),(8Z),(11Z),(14Z)-eicosatetraenoyl]-beta-D-glucuronate + UDP. It catalyses the reaction 15-hydroxy-(5Z,8Z,11Z,13E)-eicosatetraenoate + UDP-alpha-D-glucuronate = 15-O-(beta-D-glucuronosyl)-(5Z,8Z,11Z,14Z)-eicosatetraenoate + UDP + H(+). It carries out the reaction 20-hydroxy-(5Z,8Z,11Z,14Z)-eicosatetraenoate + UDP-alpha-D-glucuronate = 20-O-(beta-D-glucuronosyl)-(5Z,8Z,11Z,14Z)-eicosatetraenoate + UDP + H(+). The enzyme catalyses prostaglandin B1 + UDP-alpha-D-glucuronate = 15-O-(beta-D-glucuronosyl)-prostaglandin B1 + UDP + H(+). The catalysed reaction is (E)-ferulate + UDP-alpha-D-glucuronate = (E)-4-O-(beta-D-glucuronosyl)-ferulate + UDP + H(+). It catalyses the reaction (E)-ferulate + UDP-alpha-D-glucuronate = (E)-ferulic acid beta-D-glucuronate ester + UDP. UDP-glucuronosyltransferase (UGT) that catalyzes phase II biotransformation reactions in which lipophilic substrates are conjugated with glucuronic acid to increase the metabolite's water solubility, thereby facilitating excretion into either the urine or bile. Essential for the elimination and detoxification of drugs, xenobiotics and endogenous compounds. Catalyzes the glucuronidation of endogenous estrogen hormones such as estradiol, estrone and estriol. Involved in the glucuronidation of bilirubin, a degradation product occurring in the normal catabolic pathway that breaks down heme in vertebrates. Involved in the glucuronidation of arachidonic acid (AA) and AA-derived eicosanoids including 15-HETE, 20-HETE, PGB1 and F2-isoprostane (8-iso-PGF2alpha). Involved in the glucuronidation of the phytochemical ferulic acid at the phenolic or the carboxylic acid group. Also catalyzes the glucuronidation the isoflavones genistein, daidzein, glycitein, formononetin, biochanin A and prunetin, which are phytoestrogens with anticancer and cardiovascular properties. Involved in the glucuronidation of the AGTR1 angiotensin receptor antagonist losartan, a drug which can inhibit the effect of angiotensin II. Involved in the biotransformation of 7-ethyl-10-hydroxycamptothecin (SN-38), the pharmacologically active metabolite of the anticancer drug irinotecan. This is UDP-glucuronosyltransferase 1A1 from Mus musculus (Mouse).